Here is a 599-residue protein sequence, read N- to C-terminus: Ecdysone oxidase (599 aa).

FAD-binding positions include 137–140 and 537–538; these read NDMV and WH. H538 acts as the Proton acceptor in catalysis.

This sequence belongs to the GMC oxidoreductase family. Requires FAD as cofactor.

It catalyses the reaction ecdysone + O2 = 3-dehydroecdysone + H2O2. Functionally, involved in the inactivation of ecdysteroid molting hormones by converting ecdysteroids into 3-dehydroecdysteroids. The protein is Ecdysone oxidase of Spodoptera littoralis (Egyptian cotton leafworm).